The primary structure comprises 251 residues: 1-(5-phosphoribosyl)-5-[(5-phosphoribosylamino)methylideneamino] imidazole-4-carboxamide isomerase (251 aa).

D8 (proton acceptor) is an active-site residue. The active-site Proton donor is D131.

It belongs to the HisA/HisF family.

It is found in the cytoplasm. It catalyses the reaction 1-(5-phospho-beta-D-ribosyl)-5-[(5-phospho-beta-D-ribosylamino)methylideneamino]imidazole-4-carboxamide = 5-[(5-phospho-1-deoxy-D-ribulos-1-ylimino)methylamino]-1-(5-phospho-beta-D-ribosyl)imidazole-4-carboxamide. The protein operates within amino-acid biosynthesis; L-histidine biosynthesis; L-histidine from 5-phospho-alpha-D-ribose 1-diphosphate: step 4/9. This Burkholderia cenocepacia (strain ATCC BAA-245 / DSM 16553 / LMG 16656 / NCTC 13227 / J2315 / CF5610) (Burkholderia cepacia (strain J2315)) protein is 1-(5-phosphoribosyl)-5-[(5-phosphoribosylamino)methylideneamino] imidazole-4-carboxamide isomerase.